Consider the following 316-residue polypeptide: MSFASETKKELTNLEVKDCCINAELSALIRMNGALSFTNRHLVLDVQTENAAIARRIYTLLKKQYDVSVELLVRKKMRLKKNNVYIVRFSENAKAILEDLKILGENFVFERSISKELVKKRCCKRSYMRGAFLAGGSVNNPETSSYHLEIFSLYKEHNDSLCDLLNEFQLNSKTLERKKGYITYLKEAEKITEFLNVIGAHNSLLRFEDVRIVRDMRNSVNRLVNCETANLNKTIGASLRQVENIKYIDERIGLEALPEKLREIAQLRIDYQEVTLKELGEMVASGKISKSGINHRLRKLDEIAEQLRTGQTVTLK.

Positions 275–309 (TLKELGEMVASGKISKSGINHRLRKLDEIAEQLRT) form a DNA-binding region, H-T-H motif.

Belongs to the WhiA family.

The protein localises to the cytoplasm. The protein resides in the nucleoid. Involved in cell division and chromosome segregation. May influence the activity of FtsZ. Binds DNA, but does not seem to function as a transcription factor. The polypeptide is Probable cell division protein WhiA (Bacillus subtilis (strain 168)).